A 332-amino-acid polypeptide reads, in one-letter code: MARKSSLAQAAIERKPVLLRPQLNVPRMSGITALPMERRPLPVAPSPSAKPELPARSALVCHAAAASVPLPNSDSAPQPNVLLAKIRAIMFFAWSFLLSLPLFVTMMVMAPLVLAFDKYRRLAQHFVNNLWACASTAPFYKVTIIGRENLPPPDKPVVYVANHQSFLDIYSLFHLQRPFKFISKTSNFLIPIIGWSMFLTGHVMINRVDRRSQLKCLQQCRDLLAEGAPVLFFPEGTRSLDCKMAGFKKGAFSVAAKAGVEVVPITLLGTGSLMPSGKESQLRPGQVTIVVHKALPPNKNADQLCDAARQAVASSLPPELVGSATEMAPDEQ.

A helical membrane pass occupies residues 96 to 116 (FLLSLPLFVTMMVMAPLVLAF). An HXXXXD motif motif is present at residues 163–168 (HQSFLD). A helical membrane pass occupies residues 185–205 (TSNFLIPIIGWSMFLTGHVMI). Residues 235–238 (EGTR) carry the EGTR motif motif.

This sequence belongs to the 1-acyl-sn-glycerol-3-phosphate acyltransferase family.

Its subcellular location is the membrane. It catalyses the reaction a 1-acyl-sn-glycero-3-phosphate + an acyl-CoA = a 1,2-diacyl-sn-glycero-3-phosphate + CoA. It participates in phospholipid metabolism; CDP-diacylglycerol biosynthesis; CDP-diacylglycerol from sn-glycerol 3-phosphate: step 2/3. Its function is as follows. Converts lysophosphatidic acid (LPA) into phosphatidic acid by incorporating an acyl moiety at the sn-2 position of the glycerol backbone. The sequence is that of 1-acyl-sn-glycerol-3-phosphate acyltransferase CHLREDRAFT_174358 from Chlamydomonas reinhardtii (Chlamydomonas smithii).